The primary structure comprises 253 residues: Adenosylcobinamide-GDP ribazoletransferase (253 aa).

4 consecutive transmembrane segments (helical) span residues 33–53, 106–126, 132–152, and 178–198; these read ISPL…YVLL, IGSG…VALL, FYTI…GLYI, and VLLL…FLVF.

This sequence belongs to the CobS family. Mg(2+) serves as cofactor.

It localises to the cell membrane. The catalysed reaction is alpha-ribazole + adenosylcob(III)inamide-GDP = adenosylcob(III)alamin + GMP + H(+). It carries out the reaction alpha-ribazole 5'-phosphate + adenosylcob(III)inamide-GDP = adenosylcob(III)alamin 5'-phosphate + GMP + H(+). It participates in cofactor biosynthesis; adenosylcobalamin biosynthesis; adenosylcobalamin from cob(II)yrinate a,c-diamide: step 7/7. Functionally, joins adenosylcobinamide-GDP and alpha-ribazole to generate adenosylcobalamin (Ado-cobalamin). Also synthesizes adenosylcobalamin 5'-phosphate from adenosylcobinamide-GDP and alpha-ribazole 5'-phosphate. The chain is Adenosylcobinamide-GDP ribazoletransferase from Saccharolobus islandicus (strain Y.G.57.14 / Yellowstone #1) (Sulfolobus islandicus).